The chain runs to 292 residues: Homeobox-leucine zipper protein HOX19 (292 aa).

Disordered regions lie at residues 14–85, 99–133, and 217–236; these read LALG…HSVS, RERA…RLTK, and FAPP…PPAP. Positions 28–74 are enriched in low complexity; the sequence is TDAAAAHRGGCRRPSPSSQCPPLEPSLTLSLPDDAAAGAAATATATA. Positions 99 to 109 are enriched in basic and acidic residues; it reads RERAEEADGER. The homeobox DNA-binding region spans 124–183; that stretch reads STRKKLRLTKEQSALLEDRFREHSTLNPKQKVALAKQLNLRPRQVEVWFQNRRARTKLKQ. A leucine-zipper region spans residues 182–226; that stretch reads KQTEVDCEFLKRCCETLTEENRRLQRELQELRALKFAPPPPSSAA.

The protein belongs to the HD-ZIP homeobox family. Class II subfamily. Expressed in seedlings, roots, stems, leaf sheaths and blades and panicles.

It is found in the nucleus. Functionally, probable transcription factor. This is Homeobox-leucine zipper protein HOX19 (HOX19) from Oryza sativa subsp. japonica (Rice).